The following is an 870-amino-acid chain: Protein RRP6-like 2 (870 aa).

The 3'-5' exonuclease domain occupies V263–L428. An HRDC domain is found at N479–F559. Disordered regions lie at residues S583 to L605, G649 to K668, T688 to P775, and F821 to N870. 2 stretches are compositionally biased toward basic and acidic residues: residues S720–K729 and F821–A834. Over residues K840–F849 the composition is skewed to polar residues.

The protein resides in the nucleus. The protein localises to the nucleolus. It is found in the cytoplasm. Functionally, acts as an important epigenetic regulator through multiple silencing mechanisms. Involved in association with RRP6L1 in the silencing of the solo LTR locus. Controls levels of non-coding RNAs (ncRNAs) from the solo LTR locus. Seems to function independently of the RNA-mediated gene silencing (RdDM) pathway. Functions redundantly with RRP6L1 in the regulation of FLC locus. Participates in the maintenance of trimethylated 'Lys-27' (H3K27me3) at FLC locus via the regulation of antisense long non-coding RNAs (lncRNAs) and the regulation of diverse antisense RNAs derived from the FLC locus. Seems not involved in the exosomal RNA degradation. May be involved in poly(A)-mediated RNA degradation. This is Protein RRP6-like 2 from Arabidopsis thaliana (Mouse-ear cress).